We begin with the raw amino-acid sequence, 92 residues long: Kappa-scoloptoxin(15)-Ssd2a (92 aa).

A signal peptide spans 1–20 (MKMVYLGLFLIITSCVISSG).

In terms of processing, contains 3 disulfide bonds. Expressed by the venom gland.

The protein resides in the secreted. Inhibits voltage-gated potassium channels (Kv) (IC(50)=about 10 nM), when tested on DRG neurons. The polypeptide is Kappa-scoloptoxin(15)-Ssd2a (Scolopendra dehaani (Thai centipede)).